The chain runs to 562 residues: Cytochrome c oxidase subunit 1 (562 aa).

Residues Thr21 to Phe41 form a helical membrane-spanning segment. A Fe(II)-heme a-binding site is contributed by His72. 8 consecutive transmembrane segments (helical) span residues Val74–Ala94, Leu105–Leu125, Ala144–Leu164, Val187–Phe207, Leu227–Ile247, Leu267–Asp287, Val300–Leu320, and Ala345–Val365. 4 residues coordinate Cu cation: His233, Tyr237, His282, and His283. The 1'-histidyl-3'-tyrosine (His-Tyr) cross-link spans His233–Tyr237. Position 384 (His384) interacts with heme a3. The next 4 helical transmembrane spans lie at Phe385–Leu405, Leu420–His440, Val471–Val491, and Ile527–Val547. His386 lines the Fe(II)-heme a pocket.

This sequence belongs to the heme-copper respiratory oxidase family. Heme is required as a cofactor. Requires Cu cation as cofactor.

It is found in the cell membrane. The enzyme catalyses 4 Fe(II)-[cytochrome c] + O2 + 8 H(+)(in) = 4 Fe(III)-[cytochrome c] + 2 H2O + 4 H(+)(out). Its pathway is energy metabolism; oxidative phosphorylation. The protein is Cytochrome c oxidase subunit 1 (cbaA) of Thermus thermophilus (strain ATCC 27634 / DSM 579 / HB8).